Here is a 293-residue protein sequence, read N- to C-terminus: 33 kDa chaperonin (293 aa).

Intrachain disulfides connect Cys238–Cys240 and Cys271–Cys274.

This sequence belongs to the HSP33 family. In terms of processing, under oxidizing conditions two disulfide bonds are formed involving the reactive cysteines. Under reducing conditions zinc is bound to the reactive cysteines and the protein is inactive.

The protein localises to the cytoplasm. Functionally, redox regulated molecular chaperone. Protects both thermally unfolding and oxidatively damaged proteins from irreversible aggregation. Plays an important role in the bacterial defense system toward oxidative stress. The polypeptide is 33 kDa chaperonin (Staphylococcus epidermidis (strain ATCC 35984 / DSM 28319 / BCRC 17069 / CCUG 31568 / BM 3577 / RP62A)).